A 304-amino-acid polypeptide reads, in one-letter code: Probable intron-encoded endonuclease 1 (304 aa).

The region spanning aspartate 84–phenylalanine 175 is the GIY-YIG domain.

It to endonucleases of group I introns of fungi and phage.

Its subcellular location is the mitochondrion. Functionally, mitochondrial DNA endonuclease involved in intron homing. This Neurospora crassa (strain ATCC 24698 / 74-OR23-1A / CBS 708.71 / DSM 1257 / FGSC 987) protein is Probable intron-encoded endonuclease 1.